A 142-amino-acid polypeptide reads, in one-letter code: Histone H2B (142 aa).

Positions 1-10 (MPPKPAEKKP) are enriched in basic and acidic residues. The segment at 1–50 (MPPKPAEKKPSSTAGKAPASSAGKAPAEAAKKTSKAPAKSGEKKKATKVR) is disordered. An N6-acetyllysine; alternate mark is found at lysine 8 and lysine 9. Glycyl lysine isopeptide (Lys-Gly) (interchain with G-Cter in SUMO); alternate cross-links involve residues lysine 8 and lysine 9. The segment covering 11–28 (SSTAGKAPASSAGKAPAE) has biased composition (low complexity). Residue lysine 24 is modified to N6-acetyllysine. The segment covering 40–50 (SGEKKKATKVR) has biased composition (basic and acidic residues). Lysine 137 is covalently cross-linked (Glycyl lysine isopeptide (Lys-Gly) (interchain with G-Cter in ubiquitin)).

The protein belongs to the histone H2B family. The nucleosome is a histone octamer containing two molecules each of H2A, H2B, H3 and H4 assembled in one H3-H4 heterotetramer and two H2A-H2B heterodimers. The octamer wraps approximately 147 bp of DNA. In terms of processing, monoubiquitinated by the UBC2-BRE1 complex to form H2BK123ub1. H2BK123ub1 gives a specific tag for epigenetic transcriptional activation and is also prerequisite for H3K4me and H3K79me formation. H2BK123ub1 also modulates the formation of double-strand breaks during meiosis and is a prerequisite for DNA-damage checkpoint activation. Post-translationally, acetylation of N-terminal lysines and particularly formation of H2BK11ac has a positive effect on transcription. Sumoylation to form H2BK6su or H2BK7su occurs preferentially near the telomeres and represses gene transcription.

The protein resides in the nucleus. The protein localises to the chromosome. Its function is as follows. Core component of nucleosome. Nucleosomes wrap and compact DNA into chromatin, limiting DNA accessibility to the cellular machineries which require DNA as a template. Histones thereby play a central role in transcription regulation, DNA repair, DNA replication and chromosomal stability. DNA accessibility is regulated via a complex set of post-translational modifications of histones, also called histone code, and nucleosome remodeling. The protein is Histone H2B (HTB1) of Mycosarcoma maydis (Corn smut fungus).